Consider the following 1914-residue polypeptide: Diacylglycerol kinase eta (1914 aa).

Over residues 1-10 the composition is skewed to basic and acidic residues; the sequence is MSHLKLDTLH. The interval 1 to 37 is disordered; the sequence is MSHLKLDTLHVQRSPRGSRRSSRSSGRSSACSSGSIS. The span at 23–37 shows a compositional bias: low complexity; sequence RSSGRSSACSSGSIS. The 94-residue stretch at 82–175 folds into the PH domain; sequence AIIKEGFLLK…WLGSLKTATA (94 aa). 2 Phorbol-ester/DAG-type zinc fingers span residues 195–245 and 268–319; these read HHHW…IANC and PHQW…AVAC. One can recognise a DAGKc domain in the interval 350–486; the sequence is GNFSPLLVFV…DRWSIMVFEK (137 aa). 5 disordered regions span residues 621–642, 783–805, 1016–1053, 1116–1135, and 1175–1216; these read EKDQ…SEKE, GANI…NTPT, TLCS…PPRI, QHRG…TPTN, and PNTI…TVSL. Over residues 1175–1187 the composition is skewed to polar residues; it reads PNTILTTSTSPTK. Residues 1851–1914 form the SAM domain; that stretch reads WSVNEVVTWL…LQAIKDLSEN (64 aa).

It belongs to the eukaryotic diacylglycerol kinase family.

It localises to the cytoplasm. The catalysed reaction is a 1,2-diacyl-sn-glycerol + ATP = a 1,2-diacyl-sn-glycero-3-phosphate + ADP + H(+). In terms of biological role, phosphorylates diacylglycerol (DAG) to generate phosphatidic acid (PA). The polypeptide is Diacylglycerol kinase eta (Drosophila sechellia (Fruit fly)).